A 345-amino-acid polypeptide reads, in one-letter code: Membrane progestin receptor alpha (345 aa).

Residues 1 to 74 are Cytoplasmic-facing; it reads MAMAVAQKFN…FQRHNEAVNV (74 aa). Residues 75-95 traverse the membrane as a helical segment; the sequence is WTHLLAALALLLRLIGLAASV. Over 96-102 the chain is Extracellular; the sequence is DFREDPH. Residues 103-123 form a helical membrane-spanning segment; the sequence is ALPLFFIVLASFTYLSFSAVA. Residues 124 to 136 lie on the Cytoplasmic side of the membrane; it reads HLLQAKSEFWHYS. A helical membrane pass occupies residues 137 to 157; sequence FFFLDYVGVAVYQFGSALAHF. Topologically, residues 158–168 are extracellular; sequence YYAIEPSWHDK. A helical membrane pass occupies residues 169–189; it reads VQAIFLPTAAFLAWLSCAGSC. At 190-243 the chain is on the cytoplasmic side; sequence YNKYSQKPGLLGRIFQEAPSALAYVLDISPVLHRIIVSPLPAEEDPALLYHKCQ. A helical transmembrane segment spans residues 244–264; that stretch reads VVFFLLAAAFFSTVMPESWFP. At 265–268 the chain is on the extracellular side; the sequence is GSCH. A helical membrane pass occupies residues 269–289; that stretch reads IFGQGHQVFHVFLVLCTLAQL. Residues 290–315 lie on the Cytoplasmic side of the membrane; it reads EAVTLDYQARRGIYEPLHARWPHNFS. A helical membrane pass occupies residues 316-336; it reads GLFLLTVASSSLTALLLSQLV. Topologically, residues 337–345 are extracellular; it reads RRKLHQKTK.

Belongs to the ADIPOR family. In terms of tissue distribution, detected in most adult tissues. Higher expression found in white fat and liver than brown fat and skeletal muscle.

The protein resides in the cell membrane. In terms of biological role, plasma membrane progesterone (P4) receptor coupled to G proteins. Seems to act through a G(i) mediated pathway. May be involved in oocyte maturation. Involved in neurosteroid inhibition of apoptosis. Also binds dehydroepiandrosterone (DHEA), pregnanolone, pregnenolone and allopregnanolone. The sequence is that of Membrane progestin receptor alpha from Mus musculus (Mouse).